The sequence spans 2280 residues: Protein Ycf2 (2280 aa).

Position 1631–1638 (1631–1638 (GSIGTGRS)) interacts with ATP.

It belongs to the Ycf2 family.

Its subcellular location is the plastid. The protein localises to the chloroplast stroma. Its function is as follows. Probable ATPase of unknown function. Its presence in a non-photosynthetic plant (Epifagus virginiana) and experiments in tobacco indicate that it has an essential function which is probably not related to photosynthesis. This chain is Protein Ycf2 (ycf2-A), found in Nicotiana tabacum (Common tobacco).